The sequence spans 146 residues: Large ribosomal subunit protein uL13 (146 aa).

It belongs to the universal ribosomal protein uL13 family. As to quaternary structure, part of the 50S ribosomal subunit.

This protein is one of the early assembly proteins of the 50S ribosomal subunit, although it is not seen to bind rRNA by itself. It is important during the early stages of 50S assembly. In Malacoplasma penetrans (strain HF-2) (Mycoplasma penetrans), this protein is Large ribosomal subunit protein uL13.